Consider the following 341-residue polypeptide: L-threonine 3-dehydrogenase (341 aa).

A Zn(2+)-binding site is contributed by cysteine 38. Catalysis depends on charge relay system residues threonine 40 and histidine 43. Residues histidine 63, glutamate 64, cysteine 93, cysteine 96, cysteine 99, and cysteine 107 each contribute to the Zn(2+) site. NAD(+)-binding positions include isoleucine 175, aspartate 195, arginine 200, 262–264, and 286–287; these read LGI and IY.

The protein belongs to the zinc-containing alcohol dehydrogenase family. Homotetramer. Zn(2+) is required as a cofactor.

The protein localises to the cytoplasm. The enzyme catalyses L-threonine + NAD(+) = (2S)-2-amino-3-oxobutanoate + NADH + H(+). It functions in the pathway amino-acid degradation; L-threonine degradation via oxydo-reductase pathway; glycine from L-threonine: step 1/2. Catalyzes the NAD(+)-dependent oxidation of L-threonine to 2-amino-3-ketobutyrate. In Shewanella baltica (strain OS185), this protein is L-threonine 3-dehydrogenase.